The chain runs to 814 residues: Glycosyltransferase GlyD (814 aa).

A GT8 domain region spans residues 1 to 264; the sequence is MNKTIVLAGD…SQILQHHMGE (264 aa). UDP is bound by residues 8–13 and 102–103; these read AGDRNY and DS. Positions 102, 104, and 226 each coordinate Mn(2+). Position 226-232 (226-232) interacts with UDP; it reads HFTTYRK. A GT-D domain region spans residues 542–814; that stretch reads EKPLDIIQVK…NSQIVARILN (273 aa).

It in the N-terminal section; belongs to the glycosyltransferase 8 family. In the C-terminal section; belongs to the GT-D family.

It participates in protein modification; protein glycosylation. Involved in the polymorphic O-glycosylation of the serine-rich repeat protein PsrP. Catalyzes the third step in glycosylation PsrP in this bacteria. Transfers glucose from UDP-glucose to the terminal glucose moiety of already-glycosylated PsrP (using truncated substrates with PsrP SSR1-GlcNAc-Glc); the C-terminal GT-D domain is sufficient for this reaction in vitro. Also transfers galactose from UDP-galactose to the terminal glucose moiety of already-glycosylated PsrP; the C-terminal GT-D domain is also sufficient for this reaction in vitro. Activity is much higher with UDP-glucose, and the enzyme has a very marked preference for PsrP substrate that has already been modified by GlcNAc and glucose. In vitro has hydrolytic activity against UDP-galactose and to a lesser extent against UDP-glucose. In terms of biological role, also catalyzes the fourth step in glycosylation of PsrP in this bacteria. Can transfer the sugar from both UDP-glucose and UDP-galactose to the terminal sugar moiety of PsrP-GlcNAc-Glc-Glc and PsrP-GlcNAc-Glc-Gal; the C-terminal GT-D domain is also sufficient for this reaction in vitro (using truncated substrates with glycosylated PsrP SSR1). The N-terminal GT-D domain can transfer galactose from UDP-galactose to PsrP-GlcNAc-Glc-Gal or PsrP-GlcNAc-Glc-Glc in the fourth step. In Streptococcus pneumoniae serotype 4 (strain ATCC BAA-334 / TIGR4), this protein is Glycosyltransferase GlyD.